Here is a 359-residue protein sequence, read N- to C-terminus: tRNA N6-adenosine threonylcarbamoyltransferase (359 aa).

Residues H115 and H119 each coordinate Fe cation. Substrate is bound by residues 137–141 (LVSGG), D170, G183, and N283. Residue D311 coordinates Fe cation. Residues 328 to 359 (APDSLDIAPRSRWPLDEKSAPVFGTGRRGAKA) are disordered.

The protein belongs to the KAE1 / TsaD family. The cofactor is Fe(2+).

It is found in the cytoplasm. The enzyme catalyses L-threonylcarbamoyladenylate + adenosine(37) in tRNA = N(6)-L-threonylcarbamoyladenosine(37) in tRNA + AMP + H(+). Its function is as follows. Required for the formation of a threonylcarbamoyl group on adenosine at position 37 (t(6)A37) in tRNAs that read codons beginning with adenine. Is involved in the transfer of the threonylcarbamoyl moiety of threonylcarbamoyl-AMP (TC-AMP) to the N6 group of A37, together with TsaE and TsaB. TsaD likely plays a direct catalytic role in this reaction. This is tRNA N6-adenosine threonylcarbamoyltransferase from Brucella canis (strain ATCC 23365 / NCTC 10854 / RM-666).